A 638-amino-acid polypeptide reads, in one-letter code: Zinc finger protein 143 (638 aa).

N-acetylmethionine is present on Met-1. Lys-213 is covalently cross-linked (Glycyl lysine isopeptide (Lys-Gly) (interchain with G-Cter in SUMO2)). 4 C2H2-type zinc fingers span residues 237–261 (FRCEYDGCGKLYTTAHHLKVHERSH), 267–291 (YQCEHAGCGKAFATGYGLKSHVRTH), 297–321 (YRCSEDNCTKSFKTSGDLQKHIRTH), and 327–351 (FKCPFEGCGRSFTTSNIRKVHVRTH). Residue Thr-352 is modified to Phosphothreonine. C2H2-type zinc fingers lie at residues 357 to 381 (YYCTEPGCGRAFASATNYKNHVRIH), 387 to 411 (YVCTVPGCDKRFTEYSSLYKHHVVH), and 417 to 440 (YNCNHCGKTYKQISTLAMHKRTAH). Lys-406 participates in a covalent cross-link: Glycyl lysine isopeptide (Lys-Gly) (interchain with G-Cter in SUMO2).

It belongs to the GLI C2H2-type zinc-finger protein family. Interacts with CHD8. Forms a complex with HCFC1 and ZNF143. Expressed in all tissues tested, with the strongest expression in ovary.

The protein resides in the nucleus. Transcriptional activator. Activates the gene for selenocysteine tRNA (tRNAsec). Binds to the SPH motif of small nuclear RNA (snRNA) gene promoters. Participates in efficient U6 RNA polymerase III transcription via its interaction with CHD8. In complex with HCFC1 and ZNF143, regulates the expression of several genes, including AP2S1, ESCO2, OPHN1, RBL1, UBXN8 and ZNF32. In Homo sapiens (Human), this protein is Zinc finger protein 143 (ZNF143).